The following is a 360-amino-acid chain: Threonine synthase (360 aa).

The residue at position 69 (Lys69) is an N6-(pyridoxal phosphate)lysine. Pyridoxal 5'-phosphate is bound by residues Asn95, 196–200, and Thr326; that span reads GNAGN.

This sequence belongs to the threonine synthase family. As to quaternary structure, homodimer. It depends on pyridoxal 5'-phosphate as a cofactor.

The enzyme catalyses O-phospho-L-homoserine + H2O = L-threonine + phosphate. Its pathway is amino-acid biosynthesis; L-threonine biosynthesis; L-threonine from L-aspartate: step 5/5. Catalyzes the gamma-elimination of phosphate from L-phosphohomoserine and the beta-addition of water to produce L-threonine. The chain is Threonine synthase (thrC) from Mycobacterium leprae (strain TN).